A 1400-amino-acid polypeptide reads, in one-letter code: S phase cyclin A-associated protein in the endoplasmic reticulum (1400 aa).

Disordered stretches follow at residues E36 to K61, V226 to R277, P517 to K550, and R701 to D723. The segment covering T231 to Q243 has biased composition (polar residues). Residues T539–K550 show a composition bias toward basic and acidic residues. A C2H2-type zinc finger spans residues K792–H816. The residue at position 832 (S832) is a Phosphoserine.

In terms of assembly, interacts with CCNA2/CDK2 complex, but not with CCNA2/CDC2, CCNB1/CDC2 or CCNE1/CDK2 complexes, at multiple phases of the cell cycle, including S and G2/M. Phosphorylated in vitro by the CCNA2/CDK2 complex. In terms of tissue distribution, widely expressed with high expression in testis. Isoform 1 is detected in various tissues, including retina, fetal and adult brain. Isoform 2 is expressed in the retina at high levels, and in the brain at very low levels.

It is found in the endoplasmic reticulum. It localises to the nucleus. Its function is as follows. CCNA2/CDK2 regulatory protein that transiently maintains CCNA2 in the cytoplasm. In Homo sapiens (Human), this protein is S phase cyclin A-associated protein in the endoplasmic reticulum.